The sequence spans 233 residues: 2,3,4,5-tetrahydropyridine-2,6-dicarboxylate N-acetyltransferase (233 aa).

The protein belongs to the transferase hexapeptide repeat family. DapH subfamily.

The enzyme catalyses (S)-2,3,4,5-tetrahydrodipicolinate + acetyl-CoA + H2O = L-2-acetamido-6-oxoheptanedioate + CoA. The protein operates within amino-acid biosynthesis; L-lysine biosynthesis via DAP pathway; LL-2,6-diaminopimelate from (S)-tetrahydrodipicolinate (acetylase route): step 1/3. In terms of biological role, catalyzes the transfer of an acetyl group from acetyl-CoA to tetrahydrodipicolinate. This is 2,3,4,5-tetrahydropyridine-2,6-dicarboxylate N-acetyltransferase from Oenococcus oeni (strain ATCC BAA-331 / PSU-1).